Here is a 334-residue protein sequence, read N- to C-terminus: Glyceraldehyde-3-phosphate dehydrogenase 2 (334 aa).

NAD(+) is bound by residues 12–13, D35, and R79; that span reads RI. Residues 152-154, T183, R198, 211-212, and R234 each bind D-glyceraldehyde 3-phosphate; these read SCT and SG. The active-site Nucleophile is C153. N315 provides a ligand contact to NAD(+).

It belongs to the glyceraldehyde-3-phosphate dehydrogenase family. As to quaternary structure, homotetramer.

The protein localises to the cytoplasm. It catalyses the reaction D-glyceraldehyde 3-phosphate + phosphate + NAD(+) = (2R)-3-phospho-glyceroyl phosphate + NADH + H(+). Its pathway is carbohydrate degradation; glycolysis; pyruvate from D-glyceraldehyde 3-phosphate: step 1/5. With respect to regulation, inhibited by pentalenolactone (PL). Catalyzes the oxidative phosphorylation of glyceraldehyde 3-phosphate (G3P) to 1,3-bisphosphoglycerate (BPG) using the cofactor NAD. The first reaction step involves the formation of a hemiacetal intermediate between G3P and a cysteine residue, and this hemiacetal intermediate is then oxidized to a thioester, with concomitant reduction of NAD to NADH. The reduced NADH is then exchanged with the second NAD, and the thioester is attacked by a nucleophilic inorganic phosphate to produce BPG. This is Glyceraldehyde-3-phosphate dehydrogenase 2 (gap2) from Streptomyces arenae.